Reading from the N-terminus, the 501-residue chain is Ribose import ATP-binding protein RbsA (501 aa).

ABC transporter domains are found at residues 5 to 241 (LQLK…VGRK) and 252 to 495 (APGD…VGKL). 37–44 (GENGAGKS) lines the ATP pocket.

Belongs to the ABC transporter superfamily. Ribose importer (TC 3.A.1.2.1) family. As to quaternary structure, the complex is composed of an ATP-binding protein (RbsA), two transmembrane proteins (RbsC) and a solute-binding protein (RbsB).

Its subcellular location is the cell inner membrane. It catalyses the reaction D-ribose(out) + ATP + H2O = D-ribose(in) + ADP + phosphate + H(+). Functionally, part of the ABC transporter complex RbsABC involved in ribose import. Responsible for energy coupling to the transport system. The sequence is that of Ribose import ATP-binding protein RbsA from Escherichia coli O6:H1 (strain CFT073 / ATCC 700928 / UPEC).